The following is a 254-amino-acid chain: Methyltransferase-like protein 23 (254 aa).

Residues 1-27 (MKSFIFRQNPRKQQQEQNNLVDYSDSD) are disordered. Positions 11 to 21 (RKQQQEQNNLV) are enriched in polar residues.

This sequence belongs to the methyltransferase superfamily. METTL23 family.

In terms of biological role, probable methyltransferase. This is Methyltransferase-like protein 23 from Dictyostelium discoideum (Social amoeba).